Here is a 317-residue protein sequence, read N- to C-terminus: Acetyl-coenzyme A carboxylase carboxyl transferase subunit alpha (317 aa).

The CoA carboxyltransferase C-terminal domain occupies 40-293; the sequence is LEKRSADALK…GDIIAASLRS (254 aa).

Belongs to the AccA family. As to quaternary structure, acetyl-CoA carboxylase is a heterohexamer composed of biotin carboxyl carrier protein (AccB), biotin carboxylase (AccC) and two subunits each of ACCase subunit alpha (AccA) and ACCase subunit beta (AccD).

Its subcellular location is the cytoplasm. It catalyses the reaction N(6)-carboxybiotinyl-L-lysyl-[protein] + acetyl-CoA = N(6)-biotinyl-L-lysyl-[protein] + malonyl-CoA. Its pathway is lipid metabolism; malonyl-CoA biosynthesis; malonyl-CoA from acetyl-CoA: step 1/1. Component of the acetyl coenzyme A carboxylase (ACC) complex. First, biotin carboxylase catalyzes the carboxylation of biotin on its carrier protein (BCCP) and then the CO(2) group is transferred by the carboxyltransferase to acetyl-CoA to form malonyl-CoA. This chain is Acetyl-coenzyme A carboxylase carboxyl transferase subunit alpha, found in Brucella abortus (strain S19).